A 460-amino-acid chain; its full sequence is A-type ATP synthase subunit B (460 aa).

This sequence belongs to the ATPase alpha/beta chains family. As to quaternary structure, has multiple subunits with at least A(3), B(3), C, D, E, F, H, I and proteolipid K(x).

The protein localises to the cell membrane. Functionally, component of the A-type ATP synthase that produces ATP from ADP in the presence of a proton gradient across the membrane. The B chain is a regulatory subunit. The chain is A-type ATP synthase subunit B from Thermofilum pendens (strain DSM 2475 / Hrk 5).